The following is a 201-amino-acid chain: Recombination protein RecR (201 aa).

The C4-type zinc finger occupies 59-74 (CEICGNMDTENICCIC). Residues 82 to 177 (SVIAVVETVA…KISRLASGIP (96 aa)) enclose the Toprim domain.

The protein belongs to the RecR family.

May play a role in DNA repair. It seems to be involved in an RecBC-independent recombinational process of DNA repair. It may act with RecF and RecO. The chain is Recombination protein RecR from Rickettsia felis (strain ATCC VR-1525 / URRWXCal2) (Rickettsia azadi).